The following is a 172-amino-acid chain: Macro domain-containing protein CT2219 (172 aa).

Positions 1-172 (MPDNVLIHAI…DVYQKALAAG (172 aa)) constitute a Macro domain.

Belongs to the MacroD-type family.

The chain is Macro domain-containing protein CT2219 from Chlorobaculum tepidum (strain ATCC 49652 / DSM 12025 / NBRC 103806 / TLS) (Chlorobium tepidum).